Consider the following 594-residue polypeptide: Ferredoxin--nitrite reductase, chloroplastic (594 aa).

The transit peptide at 1-32 (MASLPVNKIIPSSTTLLSSSNNNRRRNNSSIR) directs the protein to the chloroplast. A compositionally biased stretch (low complexity) spans 13-22 (STTLLSSSNN). The interval 13-36 (STTLLSSSNNNRRRNNSSIRCQKA) is disordered. Positions 473, 479, 514, and 518 each coordinate [4Fe-4S] cluster. Cys518 contacts siroheme.

It belongs to the nitrite and sulfite reductase 4Fe-4S domain family. In terms of assembly, monomer. It depends on siroheme as a cofactor. [4Fe-4S] cluster serves as cofactor.

It localises to the plastid. The protein localises to the chloroplast. The enzyme catalyses 6 oxidized [2Fe-2S]-[ferredoxin] + NH4(+) + 2 H2O = nitrite + 6 reduced [2Fe-2S]-[ferredoxin] + 8 H(+). The protein operates within nitrogen metabolism; nitrate reduction (assimilation). In Spinacia oleracea (Spinach), this protein is Ferredoxin--nitrite reductase, chloroplastic (NIR).